Here is a 474-residue protein sequence, read N- to C-terminus: Glycogen synthase (474 aa).

Residue K15 coordinates ADP-alpha-D-glucose.

Belongs to the glycosyltransferase 1 family. Bacterial/plant glycogen synthase subfamily.

The enzyme catalyses [(1-&gt;4)-alpha-D-glucosyl](n) + ADP-alpha-D-glucose = [(1-&gt;4)-alpha-D-glucosyl](n+1) + ADP + H(+). It participates in glycan biosynthesis; glycogen biosynthesis. Its function is as follows. Synthesizes alpha-1,4-glucan chains using ADP-glucose. This chain is Glycogen synthase, found in Chlamydia trachomatis serovar D (strain ATCC VR-885 / DSM 19411 / UW-3/Cx).